A 239-amino-acid chain; its full sequence is Putative 3-methyladenine DNA glycosylase (239 aa).

This sequence belongs to the DNA glycosylase MPG family.

This chain is Putative 3-methyladenine DNA glycosylase, found in Pseudomonas aeruginosa (strain LESB58).